The chain runs to 253 residues: Chemotaxis protein PomA (253 aa).

4 consecutive transmembrane segments (helical) span residues 6-26 (LLGL…GGSI), 28-48 (MFVD…VVLM), 146-166 (FGDV…VAML), and 180-200 (AVAL…FFPI). Topologically, residues 201–253 (ADKLSLRRDQETLNRRLIMDGVLAIQDGQNPRVIDSYLKNYLNEGKRALEIDE) are cytoplasmic.

The protein belongs to the MotA family. As to quaternary structure, each stator complex is composed of 4 PomA and 2 PomB subunits. 2 A subunits and 1 B subunit are thought to form a single ion channel, so that each stator complex contains two channels.

Its subcellular location is the cell inner membrane. In terms of biological role, pomA and PomB comprise the stator element of the flagellar motor complex. Required for rotation of the flagellar motor. Probable transmembrane proton channel. This Vibrio alginolyticus protein is Chemotaxis protein PomA (pomA).